We begin with the raw amino-acid sequence, 156 residues long: Protein archease-like (156 aa).

The Ca(2+) site is built by Asp-25, Asp-155, and Ile-156.

This sequence belongs to the archease family.

Functionally, component of the tRNA-splicing ligase complex required to facilitate the enzymatic turnover of catalytic subunit RtcB. Plays an important role in a RNA repair and splicing pathway which controls axon regeneration in response to peripheral (PNS) and central nervous system (CNS) injury, by activating splicing of Xbp1 to promote axon regeneration in response to axotomy. This is Protein archease-like from Drosophila melanogaster (Fruit fly).